The sequence spans 217 residues: Phosphatidylinositol phosphate synthase (217 aa).

A run of 2 helical transmembrane segments spans residues 28 to 49 and 55 to 74; these read LTPD…LTLF and FAGA…DGAM. Residue 31–34 participates in a CDP-1,2-diacyl-sn-glycerol binding; it reads DVVT. Positions 68 and 71 each coordinate Mg(2+). A CDP-1,2-diacyl-sn-glycerol contacts are provided by Gly-72, Arg-76, and Thr-82. Mg(2+) contacts are provided by Asp-89 and Asp-93. Asp-93 serves as the catalytic Proton acceptor. Helical transmembrane passes span 95 to 112, 118 to 136, 156 to 173, and 179 to 200; these read ISDG…AFHM, VIAT…YIKA, LIIV…FVPW, and VGMW…HTVW.

This sequence belongs to the CDP-alcohol phosphatidyltransferase class-I family. As to quaternary structure, homodimer. Mg(2+) is required as a cofactor.

The protein resides in the cell membrane. It carries out the reaction a CDP-1,2-diacyl-sn-glycerol + 1D-myo-inositol 3-phosphate = a 1,2-diacyl-sn-glycero-3-phospho-(1D-myo-inositol-3-phosphate) + CMP + H(+). It catalyses the reaction 1,2-di-(9Z-octadecenoyl)-sn-glycero-3-cytidine-5'-diphosphate + 1D-myo-inositol 3-phosphate = 1,2-di-(9Z-octadecenoyl)-sn-glycero-3-phospho-(1D-myo-inositol-3-phosphate) + CMP + H(+). It functions in the pathway phospholipid metabolism; phosphatidylinositol phosphate biosynthesis. With respect to regulation, competitively inhibited by several inositol 1-phosphate analogs, including the phosphonate analog 1-deoxy-1-phosphonomethyl-myo-inositol (Ino-C-P). Functionally, catalyzes the conjugation of the 1'-hydroxyl group of D-myo-inositol-3-phosphate (also named L-myo-inositol-1-phosphate) with a lipid tail of cytidine diphosphate diacylglycerol (CDP-DAG), forming phosphatidylinositol phosphate (PIP) and CMP. PIP is a precursor of phosphatidylinositol (PI) which is an essential lipid for mycobacteria required for formation of their cell wall. This chain is Phosphatidylinositol phosphate synthase, found in Mycobacterium bovis (strain BCG / Pasteur 1173P2).